A 20-amino-acid polypeptide reads, in one-letter code: Short cationic peptide-4a (20 aa).

A Glutamic acid 1-amide modification is found at Glu-20.

Expressed by the venom gland.

It localises to the secreted. The polypeptide is Short cationic peptide-4a (Cupiennius salei (American wandering spider)).